We begin with the raw amino-acid sequence, 755 residues long: Serine/threonine-protein kinase GL21140 (755 aa).

Over residues 18–52 (QASASGSGTPKKTAASSAAAQNSKQLLDQLSQQQK) the composition is skewed to low complexity. The interval 18–128 (QASASGSGTP…GSANTNGSAS (111 aa)) is disordered. Composition is skewed to basic and acidic residues over residues 53–66 (AQEE…RDCD) and 74–84 (EPEKDLDELRD). A compositionally biased stretch (polar residues) spans 87–99 (GSLTGSGSVGKSN). Positions 100 to 128 (GSLSGASSTTSAPAGTSTPGSANTNGSAS) are enriched in low complexity. Doublecortin domains lie at 157–243 (HRIK…VDYN) and 314–397 (RIVT…VDDF). Positions 484-742 (YTLSQIIGDG…SEDILDHYWT (259 aa)) constitute a Protein kinase domain. Residues 490-498 (IGDGNFAIV) and Lys513 each bind ATP. Residue Asp605 is the Proton acceptor of the active site.

Belongs to the protein kinase superfamily. CAMK Ser/Thr protein kinase family. CaMK subfamily.

It catalyses the reaction L-seryl-[protein] + ATP = O-phospho-L-seryl-[protein] + ADP + H(+). The catalysed reaction is L-threonyl-[protein] + ATP = O-phospho-L-threonyl-[protein] + ADP + H(+). This is Serine/threonine-protein kinase GL21140 from Drosophila persimilis (Fruit fly).